We begin with the raw amino-acid sequence, 505 residues long: Deoxyguanosinetriphosphate triphosphohydrolase (505 aa).

The HD domain occupies 66–273 (RLTHSMEVQQ…MEAADDISYC (208 aa)).

It belongs to the dGTPase family. Type 1 subfamily. Homotetramer. The cofactor is Mg(2+).

It catalyses the reaction dGTP + H2O = 2'-deoxyguanosine + triphosphate + H(+). Its function is as follows. dGTPase preferentially hydrolyzes dGTP over the other canonical NTPs. The polypeptide is Deoxyguanosinetriphosphate triphosphohydrolase (Escherichia coli (strain K12 / MC4100 / BW2952)).